We begin with the raw amino-acid sequence, 244 residues long: 5-oxoprolinase subunit A (244 aa).

It belongs to the LamB/PxpA family. As to quaternary structure, forms a complex composed of PxpA, PxpB and PxpC.

The enzyme catalyses 5-oxo-L-proline + ATP + 2 H2O = L-glutamate + ADP + phosphate + H(+). Functionally, catalyzes the cleavage of 5-oxoproline to form L-glutamate coupled to the hydrolysis of ATP to ADP and inorganic phosphate. In Escherichia coli O157:H7, this protein is 5-oxoprolinase subunit A.